Consider the following 1273-residue polypeptide: Homeobox protein cut-like ceh-44 (1273 aa).

2 coiled-coil regions span residues 101 to 407 (LLKG…DGFK) and 440 to 468 (RQKN…KFED). DNA-binding regions (CUT) lie at residues 591-681 (NVQA…LSPR), 832-919 (QAQY…KQPK), and 978-1065 (IDES…KEES). The tract at residues 1069–1100 (VKAKIESVPAPREAPRPVKRKHSSDTDDYDLN) is disordered. Residues 1103–1162 (KPIQRTVITDYQKDTLRFVFVNEQHPSNELCEQISLKLDMSLRTVQNWFHNHRTRSKARE) constitute a DNA-binding region (homeobox).

This sequence belongs to the CUT homeobox family.

It is found in the nucleus. Functionally, probable DNA-binding regulatory protein involved in cell-fate specification. The chain is Homeobox protein cut-like ceh-44 from Caenorhabditis elegans.